We begin with the raw amino-acid sequence, 89 residues long: Large ribosomal subunit protein bL27 (89 aa).

Residues 1-21 are disordered; it reads MAHKKAGGSSRNGRDSKGKRL.

It belongs to the bacterial ribosomal protein bL27 family.

This is Large ribosomal subunit protein bL27 from Bradyrhizobium sp. (strain ORS 278).